A 1380-amino-acid chain; its full sequence is DNA-directed RNA polymerase subunit beta (1380 aa).

It belongs to the RNA polymerase beta chain family. The RNAP catalytic core consists of 2 alpha, 1 beta, 1 beta' and 1 omega subunit. When a sigma factor is associated with the core the holoenzyme is formed, which can initiate transcription.

The enzyme catalyses RNA(n) + a ribonucleoside 5'-triphosphate = RNA(n+1) + diphosphate. Functionally, DNA-dependent RNA polymerase catalyzes the transcription of DNA into RNA using the four ribonucleoside triphosphates as substrates. The sequence is that of DNA-directed RNA polymerase subunit beta from Ehrlichia chaffeensis (strain ATCC CRL-10679 / Arkansas).